Consider the following 113-residue polypeptide: Large ribosomal subunit protein P2 (113 aa).

Positions 66–113 (PVGGGGAVAAADAAPAAAAGGDKKEAKKEEKKEESESEDDDMGFALFE) are disordered. Positions 73 to 85 (VAAADAAPAAAAG) are enriched in low complexity. Positions 86-99 (GDKKEAKKEEKKEE) are enriched in basic and acidic residues. Ser100 and Ser102 each carry phosphoserine.

This sequence belongs to the eukaryotic ribosomal protein P1/P2 family. As to quaternary structure, P1 and P2 exist as dimers at the large ribosomal subunit.

Plays an important role in the elongation step of protein synthesis. The chain is Large ribosomal subunit protein P2 (RpLP2) from Drosophila melanogaster (Fruit fly).